Reading from the N-terminus, the 418-residue chain is Serine hydroxymethyltransferase (418 aa).

(6S)-5,6,7,8-tetrahydrofolate-binding positions include leucine 121 and 125 to 127 (GHL). An N6-(pyridoxal phosphate)lysine modification is found at lysine 230. Residue 356–358 (SPF) participates in (6S)-5,6,7,8-tetrahydrofolate binding.

It belongs to the SHMT family. In terms of assembly, homodimer. It depends on pyridoxal 5'-phosphate as a cofactor.

It is found in the cytoplasm. It catalyses the reaction (6R)-5,10-methylene-5,6,7,8-tetrahydrofolate + glycine + H2O = (6S)-5,6,7,8-tetrahydrofolate + L-serine. Its pathway is one-carbon metabolism; tetrahydrofolate interconversion. It participates in amino-acid biosynthesis; glycine biosynthesis; glycine from L-serine: step 1/1. In terms of biological role, catalyzes the reversible interconversion of serine and glycine with tetrahydrofolate (THF) serving as the one-carbon carrier. This reaction serves as the major source of one-carbon groups required for the biosynthesis of purines, thymidylate, methionine, and other important biomolecules. Also exhibits THF-independent aldolase activity toward beta-hydroxyamino acids, producing glycine and aldehydes, via a retro-aldol mechanism. The chain is Serine hydroxymethyltransferase from Pseudoalteromonas translucida (strain TAC 125).